A 595-amino-acid polypeptide reads, in one-letter code: Probable translation initiation factor IF-2 (595 aa).

Positions 11 to 225 (LRTPIVAVLG…ILVGLAQRYL (215 aa)) constitute a tr-type G domain. Positions 20-27 (GHVDHGKT) are G1. Residue 20 to 27 (GHVDHGKT) coordinates GTP. A G2 region spans residues 45-49 (GITQH). A G3 region spans residues 81-84 (DTPG). GTP is bound by residues 81-85 (DTPGH) and 135-138 (NKID). A G4 region spans residues 135 to 138 (NKID). The G5 stretch occupies residues 203–205 (SAL).

This sequence belongs to the TRAFAC class translation factor GTPase superfamily. Classic translation factor GTPase family. IF-2 subfamily.

Function in general translation initiation by promoting the binding of the formylmethionine-tRNA to ribosomes. Seems to function along with eIF-2. The sequence is that of Probable translation initiation factor IF-2 (infB) from Archaeoglobus fulgidus (strain ATCC 49558 / DSM 4304 / JCM 9628 / NBRC 100126 / VC-16).